The following is a 297-amino-acid chain: Bifunctional protein FolD (297 aa).

Residues 168-170 (GRG), Thr-195, and Val-236 contribute to the NADP(+) site.

The protein belongs to the tetrahydrofolate dehydrogenase/cyclohydrolase family. As to quaternary structure, homodimer.

The catalysed reaction is (6R)-5,10-methylene-5,6,7,8-tetrahydrofolate + NADP(+) = (6R)-5,10-methenyltetrahydrofolate + NADPH. It carries out the reaction (6R)-5,10-methenyltetrahydrofolate + H2O = (6R)-10-formyltetrahydrofolate + H(+). It participates in one-carbon metabolism; tetrahydrofolate interconversion. Functionally, catalyzes the oxidation of 5,10-methylenetetrahydrofolate to 5,10-methenyltetrahydrofolate and then the hydrolysis of 5,10-methenyltetrahydrofolate to 10-formyltetrahydrofolate. This is Bifunctional protein FolD from Bifidobacterium animalis subsp. lactis (strain AD011).